Consider the following 462-residue polypeptide: Microspherule protein 1 (462 aa).

Position 1 is an N-acetylmethionine (Met1). The interval 1 to 130 (MDKDSQGLLD…KSKQPLQVTK (130 aa)) is disordered. Ser22 is subject to Phosphoserine. Residues 43–55 (PKRRSSSRFIKRK) are compositionally biased toward basic residues. The segment covering 81–90 (SGRCSGSEPS) has biased composition (low complexity). Phosphoserine is present on Ser102. A Phosphothreonine modification is found at Thr103. The segment covering 103–112 (TPVPPSPAPT) has biased composition (pro residues). Phosphoserine is present on Ser108. The Nuclear localization signal motif lies at 113–123 (PGLTKRVKKSK). 2 positions are modified to N6-acetyllysine: Lys123 and Lys130. Phosphoserine is present on Ser282. Residues 301–335 (LEHELTVADRRQKREIRQLEQELHKWQVLVDSITG) adopt a coiled-coil conformation. The FHA domain occupies 363–419 (ITLGRATKDNQIDVDLSLEGPAWKISRKQGVIKLKNNGDFFIANEGRRPIYIDGRPV). The UBR5-degron signature appears at 389 to 396 (RKQGVIKL).

In terms of assembly, component of the chromatin remodeling INO80 complex; specifically part of a complex module associated with the N-terminus of INO80. Component of some MLL1/MLL complex, at least composed of the core components KMT2A/MLL1, ASH2L, HCFC1, WDR5 and RBBP5, as well as the facultative components BACC1, CHD8, E2F6, HSP70, INO80C, KANSL1, LAS1L, MAX, MCRS1, MGA, KAT8/MOF, PELP1, PHF20, PRP31, RING2, RUVB1/TIP49A, RUVB2/TIP49B, SENP3, TAF1, TAF4, TAF6, TAF7, TAF9 and TEX10. Component of the NSL complex at least composed of MOF/KAT8, KANSL1, KANSL2, KANSL3, MCRS1, PHF20, OGT1/OGT, WDR5 and HCFC1. Interacts with NOP2. Interacts with PINX1. Interacts with TERT. Interacts with CCDC85B. Interacts with DAXX. Interacts (via N-terminus) with FMR1 (via phosphorylated form). Interacts with FXR1 and FXR2. Interacts (via C-terminus) with NDE1 (via C-terminus); phosphorylation of NDE1 inhibits the interaction. Interacts (via C-terminus) with ZNF375. Interacts (via C-terminus) with active GTP-bound RHEB (via N-terminus) under conditions of high amino acid concentration; the interaction promotes mTORC1 complex activation by RHEB. Interacts (via N-terminus) with the mTORC1 complex; the interaction ensures mTORC1 activation by RHEB. Interacts with DYNC1I1; the interaction is required for the proper distribution of centriolar satellites. Interacts with TTBK2; the interaction is required for recruitment of TTBK2 to the mother centriole. Interacts with KIF2A; the interaction occurs during mitosis and facilitates chromosome alignment. In terms of processing, ubiquitinated by UBR5 when not assembled in the INO80 complex, leading to its degradation: UBR5 recognizes and binds a degron that is not accessible when MCRS1 is part of the INO80 complex. Post-translationally, phosphorylated by AURKA on Ser-35 and/or Ser-36 during mitosis which is required for kinetochore fiber assembly and mitotic progression but not for spindle localization or for chromosome-induced microtuble aster formation. Also phosphorylated by AURKA on Ser-85 and/or Ser-87. Phosphorylated by TTK/MPS1 which enhances recruitment of KIF2A to the minus end of spindle microtubules and facilitates precise chromosome segregation.

The protein resides in the nucleus. It is found in the nucleolus. Its subcellular location is the cytoplasm. The protein localises to the cytoskeleton. It localises to the microtubule organizing center. The protein resides in the centrosome. It is found in the spindle pole. Its subcellular location is the chromosome. The protein localises to the centromere. It localises to the kinetochore. The protein resides in the lysosome. It is found in the centriolar satellite. Functionally, modulates the transcription repressor activity of DAXX by recruiting it to the nucleolus. As part of the NSL complex it may be involved in acetylation of nucleosomal histone H4 on several lysine residues. Putative regulatory component of the chromatin remodeling INO80 complex which is involved in transcriptional regulation, DNA replication and probably DNA repair. May also be an inhibitor of TERT telomerase activity. Binds to G-quadruplex structures in mRNA. Binds to RNA homomer poly(G) and poly(U). Maintains RHEB at the lysosome in its active GTP-bound form and prevents its interaction with the mTORC1 complex inhibitor TSC2, ensuring activation of the mTORC1 complex by RHEB. Stabilizes the minus ends of kinetochore fibers by protecting them from depolymerization, ensuring functional spindle assembly during mitosis. Following phosphorylation by TTK/MPS1, enhances recruitment of KIF2A to the minus ends of mitotic spindle microtubules which promotes chromosome alignment. Regulates the morphology of microtubule minus ends in mitotic spindle by maintaining them in a closed conformation characterized by the presence of an electron-dense cap. Regulates G2/M transition and spindle assembly during oocyte meiosis. Mediates histone modifications and transcriptional regulation in germinal vesicle oocytes which are required for meiotic progression. Also regulates microtubule nucleation and spindle assembly by activating aurora kinases during oocyte meiosis. Contributes to the establishment of centriolar satellites and also plays a role in primary cilium formation by recruiting TTBK2 to the mother centriole which is necessary for removal of the CP110 cap from the mother centriole, an early step in ciliogenesis. Required for epiblast development during early embryogenesis. Essential for cell viability. This Mus musculus (Mouse) protein is Microspherule protein 1 (Mcrs1).